The sequence spans 250 residues: Ubiquinone/menaquinone biosynthesis C-methyltransferase UbiE (250 aa).

S-adenosyl-L-methionine is bound by residues T74, D94, 122-123, and S139; that span reads DA.

Belongs to the class I-like SAM-binding methyltransferase superfamily. MenG/UbiE family.

The enzyme catalyses a 2-demethylmenaquinol + S-adenosyl-L-methionine = a menaquinol + S-adenosyl-L-homocysteine + H(+). It carries out the reaction a 2-methoxy-6-(all-trans-polyprenyl)benzene-1,4-diol + S-adenosyl-L-methionine = a 5-methoxy-2-methyl-3-(all-trans-polyprenyl)benzene-1,4-diol + S-adenosyl-L-homocysteine + H(+). It participates in quinol/quinone metabolism; menaquinone biosynthesis; menaquinol from 1,4-dihydroxy-2-naphthoate: step 2/2. Its pathway is cofactor biosynthesis; ubiquinone biosynthesis. Methyltransferase required for the conversion of demethylmenaquinol (DMKH2) to menaquinol (MKH2) and the conversion of 2-polyprenyl-6-methoxy-1,4-benzoquinol (DDMQH2) to 2-polyprenyl-3-methyl-6-methoxy-1,4-benzoquinol (DMQH2). The polypeptide is Ubiquinone/menaquinone biosynthesis C-methyltransferase UbiE (Dinoroseobacter shibae (strain DSM 16493 / NCIMB 14021 / DFL 12)).